Here is a 121-residue protein sequence, read N- to C-terminus: Large ribosomal subunit protein uL22 (121 aa).

It belongs to the universal ribosomal protein uL22 family. Part of the 50S ribosomal subunit.

Functionally, this protein binds specifically to 23S rRNA; its binding is stimulated by other ribosomal proteins, e.g. L4, L17, and L20. It is important during the early stages of 50S assembly. It makes multiple contacts with different domains of the 23S rRNA in the assembled 50S subunit and ribosome. Its function is as follows. The globular domain of the protein is located near the polypeptide exit tunnel on the outside of the subunit, while an extended beta-hairpin is found that lines the wall of the exit tunnel in the center of the 70S ribosome. This Beutenbergia cavernae (strain ATCC BAA-8 / DSM 12333 / CCUG 43141 / JCM 11478 / NBRC 16432 / NCIMB 13614 / HKI 0122) protein is Large ribosomal subunit protein uL22.